A 326-amino-acid chain; its full sequence is Phospho-N-acetylmuramoyl-pentapeptide-transferase (326 aa).

A run of 10 helical transmembrane segments spans residues 5–25, 51–71, 82–102, 122–142, 148–168, 180–200, 204–224, 229–249, 252–272, and 304–324; these read GLLI…PIFI, TPTM…LIMA, VWLL…DDFI, IIIA…TVIY, LQFD…VGAS, LLAG…WYGI, VVAV…VFNA, VFMG…ISIL, LEIL…SVII, and VVTT…YIEV.

Belongs to the glycosyltransferase 4 family. MraY subfamily. Mg(2+) serves as cofactor.

The protein localises to the cell membrane. The enzyme catalyses UDP-N-acetyl-alpha-D-muramoyl-L-alanyl-gamma-D-glutamyl-meso-2,6-diaminopimeloyl-D-alanyl-D-alanine + di-trans,octa-cis-undecaprenyl phosphate = di-trans,octa-cis-undecaprenyl diphospho-N-acetyl-alpha-D-muramoyl-L-alanyl-D-glutamyl-meso-2,6-diaminopimeloyl-D-alanyl-D-alanine + UMP. It participates in cell wall biogenesis; peptidoglycan biosynthesis. Functionally, catalyzes the initial step of the lipid cycle reactions in the biosynthesis of the cell wall peptidoglycan: transfers peptidoglycan precursor phospho-MurNAc-pentapeptide from UDP-MurNAc-pentapeptide onto the lipid carrier undecaprenyl phosphate, yielding undecaprenyl-pyrophosphoryl-MurNAc-pentapeptide, known as lipid I. The chain is Phospho-N-acetylmuramoyl-pentapeptide-transferase from Oceanobacillus iheyensis (strain DSM 14371 / CIP 107618 / JCM 11309 / KCTC 3954 / HTE831).